A 251-amino-acid polypeptide reads, in one-letter code: Protein unc-119 homolog B (251 aa).

The disordered stretch occupies residues 1 to 28; that stretch reads MSGSNPKAAAAASAAGPGGLVAGKEEKK. Ser-2 bears the N-acetylserine mark. N6-acetyllysine is present on Lys-24. Tetradecanoate is bound at residue Tyr-142.

The protein belongs to the PDE6D/unc-119 family. In terms of assembly, found in a complex with ARL3, RP2 and UNC119B; RP2 induces hydrolysis of GTP ARL3 in the complex, leading to the release of UNC119B. Interacts with NPHP3 (when myristoylated). Interacts with CYS1 (when myristoylated). Interacts with MACIR; interaction only takes place when UNC119B is not liganded with myristoylated proteins.

The protein localises to the cell projection. It is found in the cilium. Myristoyl-binding protein that acts as a cargo adapter: specifically binds the myristoyl moiety of a subset of N-terminally myristoylated proteins and is required for their localization. Binds myristoylated NPHP3 and plays a key role in localization of NPHP3 to the primary cilium membrane. Does not bind all myristoylated proteins. Probably plays a role in trafficking proteins in photoreceptor cells. This is Protein unc-119 homolog B (UNC119B) from Homo sapiens (Human).